The primary structure comprises 287 residues: 3-methyl-2-oxobutanoate hydroxymethyltransferase (287 aa).

Residues Asp67 and Asp106 each coordinate Mg(2+). 3-methyl-2-oxobutanoate contacts are provided by residues Asp67 to Ser68, Asp106, and Lys136. A Mg(2+)-binding site is contributed by Glu138. Residue Glu204 is the Proton acceptor of the active site.

This sequence belongs to the PanB family. As to quaternary structure, homodecamer; pentamer of dimers. It depends on Mg(2+) as a cofactor.

It localises to the cytoplasm. The enzyme catalyses 3-methyl-2-oxobutanoate + (6R)-5,10-methylene-5,6,7,8-tetrahydrofolate + H2O = 2-dehydropantoate + (6S)-5,6,7,8-tetrahydrofolate. It participates in cofactor biosynthesis; (R)-pantothenate biosynthesis; (R)-pantoate from 3-methyl-2-oxobutanoate: step 1/2. Catalyzes the reversible reaction in which hydroxymethyl group from 5,10-methylenetetrahydrofolate is transferred onto alpha-ketoisovalerate to form ketopantoate. In Streptomyces avermitilis (strain ATCC 31267 / DSM 46492 / JCM 5070 / NBRC 14893 / NCIMB 12804 / NRRL 8165 / MA-4680), this protein is 3-methyl-2-oxobutanoate hydroxymethyltransferase.